Consider the following 120-residue polypeptide: Chaperonin GroEL (120 aa).

An ATP-binding site is contributed by 23–27 (DGTTT).

Belongs to the chaperonin (HSP60) family. In terms of assembly, forms a cylinder of 14 subunits composed of two heptameric rings stacked back-to-back. Interacts with the co-chaperonin GroES.

Its subcellular location is the cytoplasm. It catalyses the reaction ATP + H2O + a folded polypeptide = ADP + phosphate + an unfolded polypeptide.. Its function is as follows. Together with its co-chaperonin GroES, plays an essential role in assisting protein folding. The GroEL-GroES system forms a nano-cage that allows encapsulation of the non-native substrate proteins and provides a physical environment optimized to promote and accelerate protein folding. The polypeptide is Chaperonin GroEL (Mycobacterium intracellulare).